Consider the following 190-residue polypeptide: Inner membrane-spanning protein YciB (190 aa).

The next 6 membrane-spanning stretches (helical) occupy residues 3-23 (FLFDLFPVILFFAAFKVAGIY), 24-44 (VATTVAMVATVLQIAWVWFKH), 49-69 (AMQWLSLLIIGVFGGATLIFH), 76-96 (WKPTVLYWLFGVVLLGSVVVV), 121-141 (LVWALFFLVMGCLNLYVAYNF), and 149-169 (FKLFGSMGLMVVFILAQSVWL).

This sequence belongs to the YciB family.

The protein localises to the cell inner membrane. Functionally, plays a role in cell envelope biogenesis, maintenance of cell envelope integrity and membrane homeostasis. The polypeptide is Inner membrane-spanning protein YciB (Ralstonia pickettii (strain 12J)).